The sequence spans 183 residues: MIGYLRGLAVIVEDVEFARRLYKEGFYGRFLGYDKVKRDEVEKINAPLILGLYEALYLAEKGRLKVMGEDGREVAPEELAALGRERMRNFDEIYKIYKYFRDLGYVVKSGLKFGALFSVYEKGPGIDHAPMVVVFLEPDKGISATDITRGGRLSHSVRKTWTLATVLRQTGEVVLLGFGWARL.

Catalysis depends on residues Tyr120, His128, and Lys159.

The protein belongs to the tRNA-intron endonuclease family. Archaeal short subfamily. As to quaternary structure, homotetramer; although the tetramer contains four active sites, only two participate in the cleavage. Therefore, it should be considered as a dimer of dimers.

The catalysed reaction is pretRNA = a 3'-half-tRNA molecule with a 5'-OH end + a 5'-half-tRNA molecule with a 2',3'-cyclic phosphate end + an intron with a 2',3'-cyclic phosphate and a 5'-hydroxyl terminus.. Functionally, endonuclease that removes tRNA introns. Cleaves pre-tRNA at the 5'- and 3'-splice sites to release the intron. The products are an intron and two tRNA half-molecules bearing 2',3' cyclic phosphate and 5'-OH termini. Recognizes a pseudosymmetric substrate in which 2 bulged loops of 3 bases are separated by a stem of 4 bp. In Pyrobaculum aerophilum (strain ATCC 51768 / DSM 7523 / JCM 9630 / CIP 104966 / NBRC 100827 / IM2), this protein is tRNA-splicing endonuclease.